Consider the following 466-residue polypeptide: Ribosomal protein uS12 methylthiotransferase RimO (466 aa).

In terms of domain architecture, MTTase N-terminal spans 16–127; it reads PKVAFAHLGC…IVDVLQRVEA (112 aa). Cys25, Cys61, Cys90, Cys165, Cys169, and Cys172 together coordinate [4Fe-4S] cluster. The region spanning 151–380 is the Radical SAM core domain; sequence TTDQAVAYLK…MALQQPIAAE (230 aa). The TRAM domain maps to 383-454; that stretch reads QRWVGKTVDV…IYDLTGHIVG (72 aa).

The protein belongs to the methylthiotransferase family. RimO subfamily. It depends on [4Fe-4S] cluster as a cofactor.

The protein localises to the cytoplasm. The catalysed reaction is L-aspartate(89)-[ribosomal protein uS12]-hydrogen + (sulfur carrier)-SH + AH2 + 2 S-adenosyl-L-methionine = 3-methylsulfanyl-L-aspartate(89)-[ribosomal protein uS12]-hydrogen + (sulfur carrier)-H + 5'-deoxyadenosine + L-methionine + A + S-adenosyl-L-homocysteine + 2 H(+). Catalyzes the methylthiolation of an aspartic acid residue of ribosomal protein uS12. The polypeptide is Ribosomal protein uS12 methylthiotransferase RimO (Synechococcus sp. (strain CC9902)).